We begin with the raw amino-acid sequence, 274 residues long: Diaminopimelate epimerase (274 aa).

The substrate site is built by Asn-11, Gln-44, and Asn-64. The Proton donor role is filled by Cys-73. Substrate-binding positions include 74–75 (GN), Asn-157, Asn-190, and 208–209 (ER). The Proton acceptor role is filled by Cys-217. Substrate is bound at residue 218–219 (GS).

It belongs to the diaminopimelate epimerase family. Homodimer.

Its subcellular location is the cytoplasm. It carries out the reaction (2S,6S)-2,6-diaminopimelate = meso-2,6-diaminopimelate. Its pathway is amino-acid biosynthesis; L-lysine biosynthesis via DAP pathway; DL-2,6-diaminopimelate from LL-2,6-diaminopimelate: step 1/1. Functionally, catalyzes the stereoinversion of LL-2,6-diaminopimelate (L,L-DAP) to meso-diaminopimelate (meso-DAP), a precursor of L-lysine and an essential component of the bacterial peptidoglycan. The sequence is that of Diaminopimelate epimerase from Histophilus somni (strain 2336) (Haemophilus somnus).